An 87-amino-acid chain; its full sequence is Beta-defensin 109 (87 aa).

An N-terminal signal peptide occupies residues 1 to 22; sequence MRLHLLLLILLLFSILLSPVRG. Intrachain disulfides connect C31/C59, C38/C53, and C43/C60.

Belongs to the beta-defensin family.

It localises to the secreted. Has antibacterial activity. The chain is Beta-defensin 109 (DEFB109) from Pan troglodytes (Chimpanzee).